Here is a 1499-residue protein sequence, read N- to C-terminus: Multidrug resistance protein CDR2 (1499 aa).

The Cytoplasmic segment spans residues 1–511; the sequence is MSTANTSLSQ…NFLRMKGDPS (511 aa). The ABC transporter 1 domain maps to 148-402; sequence FTTEAINKLK…FENMGWKCPQ (255 aa). The next 6 membrane-spanning stretches (helical) occupy residues 512–532, 546–566, 596–616, 621–641, 660–680, and 763–783; these read IPLI…SVFF, GALF…ILSL, LPVK…MVNL, GNFF…SHMF, VFLL…YILG, and FGIT…LTEF. Residues 784–1193 are Cytoplasmic-facing; the sequence is NKGAMQKGEI…TIVQDWRSPG (410 aa). Residues 857 to 1101 enclose the ABC transporter 2 domain; it reads FFWRDLTYQV…MINYFEKYGA (245 aa). 893–900 is a binding site for ATP; sequence GASGAGKT. A run of 6 helical transmembrane segments spans residues 1194 to 1214, 1229 to 1249, 1279 to 1299, 1315 to 1335, 1354 to 1374, and 1465 to 1485; these read YIYS…FSFF, AVFM…PYFV, IPFQ…PVGL, LMWM…QLAI, LCLM…FWIF, and FGIF…FYWL.

It belongs to the ABC transporter superfamily. ABCG family. PDR (TC 3.A.1.205) subfamily.

The protein resides in the membrane. Multidrug efflux transporter. Confers resistance to azole antifungal agents, to other antifungals (terbinafine, amorolfine) and to a variety of metabolic inhibitors. This Candida albicans (strain SC5314 / ATCC MYA-2876) (Yeast) protein is Multidrug resistance protein CDR2 (CDR2).